The primary structure comprises 698 residues: MRKRVTYKIGEHDLILETGYLAKQANGSIYAEYAGSAILATICASGQAQEGLDYVPLTVDYNEKYYAAGKIPGGFIKREGRPKDKEILVSRLIDRPMRPLFNKEFGREIQLVPTCISTDMINPPDILAVIASSAAVHISDIPFDGPVAAARVAYKNGEYIINPTFSQIETADMEIVVAGTKEGITMVEGGANEVSEEVMLTALEKAHEMIKSLCKMQEDLRELAGKEKLPLVPLEAELENKQAIYDEAFPRLSKTLYLSTKMERREESDKVKKELAEKYAEQLEDEIQLKLFNALFEEMEYNILRTNILDKGLRVDGRGTKDIRPITCEIGVLPRPHGSAVFTRGETQSLGVVTIGTVFDEQIYDDIEGDRRENFILHYNFPPFSVGEVGRLGTGRREIGHGNLAHRSLYPMVPEREKFPYTVRVVSEVLESNGSSSMATVCSGTLSMLHAGVPMKKPVAGIAMGLITEGNDRYAILSDILGEEDHLGDMDFKVAGTADGITGFQMDIKIAGVSPEIMKNALAQAKEGRMHILGIMNQCISAPNAELSQYAPRVEMMTIPEDKIGALIGPGGKNVKAISDKYNVTINTENDGTVTIYSKDGTSDLKGAKSIVKGITSDPEVGMVYDGTVKKIMDFGAFVEILPGKEGLCHISKLSRSRVEKVSDVLKEGQEIPVKLLEIDKLGRLNLSYVDALEERSK.

Mg(2+)-binding residues include Asp485 and Asp491. The KH domain occupies 552–612 (PRVEMMTIPE…SDLKGAKSIV (61 aa)). One can recognise an S1 motif domain in the interval 622–690 (GMVYDGTVKK…KLGRLNLSYV (69 aa)).

The protein belongs to the polyribonucleotide nucleotidyltransferase family. Mg(2+) serves as cofactor.

The protein localises to the cytoplasm. It carries out the reaction RNA(n+1) + phosphate = RNA(n) + a ribonucleoside 5'-diphosphate. In terms of biological role, involved in mRNA degradation. Catalyzes the phosphorolysis of single-stranded polyribonucleotides processively in the 3'- to 5'-direction. The chain is Polyribonucleotide nucleotidyltransferase from Treponema denticola (strain ATCC 35405 / DSM 14222 / CIP 103919 / JCM 8153 / KCTC 15104).